Here is a 471-residue protein sequence, read N- to C-terminus: NADH-quinone oxidoreductase subunit N (471 aa).

Transmembrane regions (helical) follow at residues 6 to 26, 30 to 50, 70 to 90, 98 to 118, 123 to 143, 158 to 178, 198 to 218, 230 to 250, 264 to 284, 292 to 312, 320 to 340, 365 to 385, 400 to 420, and 438 to 458; these read FILP…LGVY, SSNI…ILIF, LSSF…SIST, IFLI…MVMI, LMVF…LASF, FVLS…VYGF, LTFG…AVPF, PTAV…TVFI, WQPI…IAAI, LIAY…STGS, IVYM…LLML, LSLL…GFFA, FLAI…LKII, and IWLK…FIFP.

This sequence belongs to the complex I subunit 2 family. NDH-1 is composed of 14 different subunits. Subunits NuoA, H, J, K, L, M, N constitute the membrane sector of the complex.

The protein localises to the cell inner membrane. It carries out the reaction a quinone + NADH + 5 H(+)(in) = a quinol + NAD(+) + 4 H(+)(out). In terms of biological role, NDH-1 shuttles electrons from NADH, via FMN and iron-sulfur (Fe-S) centers, to quinones in the respiratory chain. The immediate electron acceptor for the enzyme in this species is believed to be ubiquinone. Couples the redox reaction to proton translocation (for every two electrons transferred, four hydrogen ions are translocated across the cytoplasmic membrane), and thus conserves the redox energy in a proton gradient. This Pelagibacter ubique (strain HTCC1062) protein is NADH-quinone oxidoreductase subunit N.